The following is a 155-amino-acid chain: Protein-export protein SecB (155 aa).

The protein belongs to the SecB family. Homotetramer, a dimer of dimers. One homotetramer interacts with 1 SecA dimer.

The protein localises to the cytoplasm. Functionally, one of the proteins required for the normal export of preproteins out of the cell cytoplasm. It is a molecular chaperone that binds to a subset of precursor proteins, maintaining them in a translocation-competent state. It also specifically binds to its receptor SecA. This chain is Protein-export protein SecB, found in Psychromonas ingrahamii (strain DSM 17664 / CCUG 51855 / 37).